The primary structure comprises 296 residues: Phosphatidylglycerol--prolipoprotein diacylglyceryl transferase (296 aa).

Helical transmembrane passes span 10-30 (IAFS…LAAF), 57-77 (LLFY…MLFY), 92-112 (VWEG…ACWL), and 119-139 (LHFF…LGFG). Arg-140 contributes to the a 1,2-diacyl-sn-glycero-3-phospho-(1'-sn-glycerol) binding site. 3 helical membrane passes run 194–214 (QLYE…TFSM), 220–240 (YAVS…VEFV), and 254–274 (WLTM…VLLA).

Belongs to the Lgt family.

It localises to the cell inner membrane. The catalysed reaction is L-cysteinyl-[prolipoprotein] + a 1,2-diacyl-sn-glycero-3-phospho-(1'-sn-glycerol) = an S-1,2-diacyl-sn-glyceryl-L-cysteinyl-[prolipoprotein] + sn-glycerol 1-phosphate + H(+). The protein operates within protein modification; lipoprotein biosynthesis (diacylglyceryl transfer). In terms of biological role, catalyzes the transfer of the diacylglyceryl group from phosphatidylglycerol to the sulfhydryl group of the N-terminal cysteine of a prolipoprotein, the first step in the formation of mature lipoproteins. This chain is Phosphatidylglycerol--prolipoprotein diacylglyceryl transferase, found in Xanthomonas axonopodis pv. citri (strain 306).